The following is a 248-amino-acid chain: L-seryl-tRNA(Sec) kinase (248 aa).

7–14 provides a ligand contact to ATP; the sequence is GLPGVGKS.

This sequence belongs to the L-seryl-tRNA(Sec) kinase family.

The catalysed reaction is L-seryl-tRNA(Sec) + ATP = O-phospho-L-seryl-tRNA(Sec) + ADP. It functions in the pathway aminoacyl-tRNA biosynthesis; selenocysteinyl-tRNA(Sec) biosynthesis; selenocysteinyl-tRNA(Sec) from L-seryl-tRNA(Sec) (archaeal/eukaryal route): step 1/2. Its function is as follows. Specifically phosphorylates seryl-tRNA(Sec) to O-phosphoseryl-tRNA(Sec), an activated intermediate for selenocysteine biosynthesis. The sequence is that of L-seryl-tRNA(Sec) kinase (pstK) from Methanocaldococcus jannaschii (strain ATCC 43067 / DSM 2661 / JAL-1 / JCM 10045 / NBRC 100440) (Methanococcus jannaschii).